The chain runs to 454 residues: Aquaporin-7 (454 aa).

Topologically, residues 1 to 71 (MNINEPRDGG…LHLHNKTRNH (71 aa)) are cytoplasmic. The chain crosses the membrane as a helical span at residues 72 to 92 (FVATVAEFAGTTLFLFFAFSG). Residues 93-115 (TQVALLATPANDSNVVGTPSNPA) lie on the Extracellular side of the membrane. The N-linked (GlcNAc...) asparagine glycan is linked to Asn103. The helical transmembrane segment at 116-136 (QLLYVSLCFGFSLAVNAWVFF) threads the bilayer. The Cytoplasmic portion of the chain corresponds to 137 to 163 (RISGGLFNPAVTMGMCIVGALPYFRGL). Residues 144 to 146 (NPA) carry the NPA 1 motif. The chain crosses the membrane as a helical span at residues 164-184 (LLIFAQIIGGIAAAAIVSALF). Residues 185-202 (PGPITFRTSLGGGTSIVQ) are Extracellular-facing. The helical transmembrane segment at 203-223 (GLFIEMFLTAELVFTIFMLAA) threads the bilayer. Residues 224-229 (EKHKGT) are Cytoplasmic-facing. Residues 230 to 250 (FIAPIGIGLSLFIAELTGVYF) traverse the membrane as a helical segment. Topologically, residues 251–274 (TGGSVNPARSFGPSVVSGQFTGYH) are extracellular. An NPA 2 motif is present at residues 256-258 (NPA). The chain crosses the membrane as a helical span at residues 275–295 (WIYWVGPILGAILASAFYKFI). Topologically, residues 296–454 (KMLEYETANP…ENLRDNTHNN (159 aa)) are cytoplasmic. The tract at residues 343–454 (GASHVHENGN…ENLRDNTHNN (112 aa)) is disordered.

Belongs to the MIP/aquaporin (TC 1.A.8) family.

It localises to the membrane. The enzyme catalyses H2O(in) = H2O(out). Its function is as follows. Water channel required to facilitate the transport of water across membranes. Involved in conidiation. The protein is Aquaporin-7 of Botryotinia fuckeliana (strain B05.10) (Noble rot fungus).